Consider the following 132-residue polypeptide: Homeobox protein ceh-1 (132 aa).

Positions 1 to 60 (MRRARTAFTYEQLVALENKFKTSRYLSVVERLNLAIQLQLSETQVKIWFQNRRTKWKKHN) form a DNA-binding region, homeobox. A disordered region spans residues 56 to 80 (WKKHNPGQDANTPQTPPSSDETQIQ). A compositionally biased stretch (polar residues) spans 63–80 (QDANTPQTPPSSDETQIQ).

It localises to the nucleus. The polypeptide is Homeobox protein ceh-1 (ceh-1) (Caenorhabditis elegans).